Consider the following 390-residue polypeptide: Transaldolase (390 aa).

The active-site Schiff-base intermediate with substrate is Lys-135. 2 consecutive EF-hand domains span residues 329–364 and 365–388; these read AFCHVVQEIFMLNDLDGDGCITREEWLGSDAVFDAL and DHDHDGRLLQEDVRSGLGAALALT. Residues Asp-342, Asp-344, Asp-346, Cys-348, Glu-353, Asp-365, Asp-367, Asp-369, Arg-371, and Asp-376 each coordinate Ca(2+).

This sequence belongs to the transaldolase family. Type 1 subfamily.

It is found in the cytoplasm. The enzyme catalyses D-sedoheptulose 7-phosphate + D-glyceraldehyde 3-phosphate = D-erythrose 4-phosphate + beta-D-fructose 6-phosphate. It participates in carbohydrate degradation; pentose phosphate pathway; D-glyceraldehyde 3-phosphate and beta-D-fructose 6-phosphate from D-ribose 5-phosphate and D-xylulose 5-phosphate (non-oxidative stage): step 2/3. Its function is as follows. Transaldolase is important for the balance of metabolites in the pentose-phosphate pathway. The polypeptide is Transaldolase (Prochlorococcus marinus (strain MIT 9313)).